We begin with the raw amino-acid sequence, 547 residues long: Chaperonin GroEL (547 aa).

ATP-binding positions include 29–32, 86–90, glycine 413, 479–481, and aspartate 495; these read TLGP, DGTTT, and NAA.

This sequence belongs to the chaperonin (HSP60) family. Forms a cylinder of 14 subunits composed of two heptameric rings stacked back-to-back. Interacts with the co-chaperonin GroES.

Its subcellular location is the cytoplasm. The catalysed reaction is ATP + H2O + a folded polypeptide = ADP + phosphate + an unfolded polypeptide.. In terms of biological role, together with its co-chaperonin GroES, plays an essential role in assisting protein folding. The GroEL-GroES system forms a nano-cage that allows encapsulation of the non-native substrate proteins and provides a physical environment optimized to promote and accelerate protein folding. This is Chaperonin GroEL from Synechococcus sp. (strain RCC307).